The following is a 174-amino-acid chain: Peroxisome assembly protein 22 (174 aa).

Residues 9 to 27 (GYLAIIAAVSIGAAAYLWW) form a helical membrane-spanning segment.

This sequence belongs to the peroxin-22 family.

It localises to the peroxisome membrane. Functionally, involved in peroxisome biogenesis. The polypeptide is Peroxisome assembly protein 22 (PEX22) (Candida glabrata (strain ATCC 2001 / BCRC 20586 / JCM 3761 / NBRC 0622 / NRRL Y-65 / CBS 138) (Yeast)).